Consider the following 250-residue polypeptide: 3-deoxy-manno-octulosonate cytidylyltransferase (250 aa).

It belongs to the KdsB family.

It is found in the cytoplasm. The catalysed reaction is 3-deoxy-alpha-D-manno-oct-2-ulosonate + CTP = CMP-3-deoxy-beta-D-manno-octulosonate + diphosphate. It participates in nucleotide-sugar biosynthesis; CMP-3-deoxy-D-manno-octulosonate biosynthesis; CMP-3-deoxy-D-manno-octulosonate from 3-deoxy-D-manno-octulosonate and CTP: step 1/1. It functions in the pathway bacterial outer membrane biogenesis; lipopolysaccharide biosynthesis. In terms of biological role, activates KDO (a required 8-carbon sugar) for incorporation into bacterial lipopolysaccharide in Gram-negative bacteria. The protein is 3-deoxy-manno-octulosonate cytidylyltransferase of Francisella tularensis subsp. holarctica (strain LVS).